Here is a 334-residue protein sequence, read N- to C-terminus: Probable N5-carboxyaminoimidazole ribonucleotide mutase (334 aa).

Residues serine 11, aspartate 14, and arginine 41 each coordinate substrate.

This sequence belongs to the AIR carboxylase family. Class I subfamily.

It carries out the reaction 5-carboxyamino-1-(5-phospho-D-ribosyl)imidazole + H(+) = 5-amino-1-(5-phospho-D-ribosyl)imidazole-4-carboxylate. Its pathway is purine metabolism; IMP biosynthesis via de novo pathway; 5-amino-1-(5-phospho-D-ribosyl)imidazole-4-carboxylate from 5-amino-1-(5-phospho-D-ribosyl)imidazole (N5-CAIR route): step 2/2. Its function is as follows. Catalyzes the conversion of N5-carboxyaminoimidazole ribonucleotide (N5-CAIR) to 4-carboxy-5-aminoimidazole ribonucleotide (CAIR). The sequence is that of Probable N5-carboxyaminoimidazole ribonucleotide mutase from Methanothermobacter thermautotrophicus (strain ATCC 29096 / DSM 1053 / JCM 10044 / NBRC 100330 / Delta H) (Methanobacterium thermoautotrophicum).